Here is a 128-residue protein sequence, read N- to C-terminus: Iron-sulfur cluster insertion protein ErpA (128 aa).

The iron-sulfur cluster site is built by cysteine 56, cysteine 120, and cysteine 122.

This sequence belongs to the HesB/IscA family. In terms of assembly, homodimer. Requires iron-sulfur cluster as cofactor.

In terms of biological role, required for insertion of 4Fe-4S clusters for at least IspG. The sequence is that of Iron-sulfur cluster insertion protein ErpA from Xanthomonas euvesicatoria pv. vesicatoria (strain 85-10) (Xanthomonas campestris pv. vesicatoria).